Reading from the N-terminus, the 1182-residue chain is Myosin IC heavy chain (1182 aa).

Residues 15-698 (EGLDDMTLLS…MLFSLEETRE (684 aa)) enclose the Myosin motor domain. Position 109 to 116 (109 to 116 (GESGAGKT)) interacts with ATP. Residues 571-593 (AAELVATLMKSTPHYIRTIKPND) are actin-binding. A TH1 domain is found at 774–957 (RNRFSMISVR…QFHIASGLPA (184 aa)). Disordered stretches follow at residues 999-1052 (KPAP…PAPG) and 1064-1103 (SKPL…PAGQ). Positions 1013–1042 (KKPAPTAPGGAPMMKKPAPAPGGAPMMKKP) are enriched in low complexity. Over residues 1081-1092 (PTAPGGPAPAGA) the composition is skewed to pro residues. The SH3 domain maps to 1123-1182 (PPPQQYIALYEYDAMQPDELTFKENDVINLIKKVDADWWQGELVRTKQIGMLPSNYVQQI).

The protein belongs to the TRAFAC class myosin-kinesin ATPase superfamily. Myosin family. In terms of assembly, myosin I heavy chain is single-headed. Dimer of a heavy and a light chain. Inability to self-assemble into filaments.

Its subcellular location is the cell projection. The protein localises to the lamellipodium. Functionally, myosin is a protein that binds to actin and has ATPase activity that is activated by actin. Involved in the process of phagocytosis and appears to support streaming behavior. This chain is Myosin IC heavy chain (myoC), found in Dictyostelium discoideum (Social amoeba).